The primary structure comprises 2153 residues: Non-reducing polyketide synthase albA (2153 aa).

Residues 8–244 form an N-terminal acylcarrier protein transacylase domain (SAT) region; the sequence is YLFGDQTSDI…VKAPIHGPYH (237 aa). The region spanning 375-806 is the Ketosynthase family 3 (KS3) domain; sequence NSKIAIIGMS…GGNTALLLED (432 aa). Active-site for beta-ketoacyl synthase activity residues include cysteine 547, histidine 682, and histidine 724. The tract at residues 912 to 1232 is malonyl-CoA:ACP transacylase (MAT) domain; that stretch reads FVFTGQGAQY…LASLHLAGID (321 aa). Catalysis depends on serine 1001, which acts as the For acyl/malonyl transferase activity. An N-terminal hotdog fold region spans residues 1286-1425; that stretch reads HEYLTTAAQK…CTVRFFDCAA (140 aa). A PKS/mFAS DH domain is found at 1286 to 1598; the sequence is HEYLTTAAQK…FQALSRKILD (313 aa). The product template (PT) domain stretch occupies residues 1290–1603; sequence TTAAQKVIET…RKILDTVLPP (314 aa). Histidine 1326 (proton acceptor; for dehydratase activity) is an active-site residue. Residues 1452–1598 form a C-terminal hotdog fold region; it reads DAHRLGRGMV…FQALSRKILD (147 aa). The active-site Proton donor; for dehydratase activity is aspartate 1511. Residues 1608–1643 are disordered; sequence KGPARPAASAQKAAPAAAASKSRASAPAPAKPAAKP. A compositionally biased stretch (low complexity) spans 1610-1643; it reads PARPAASAQKAAPAAAASKSRASAPAPAKPAAKP. The Carrier 1 domain occupies 1643–1720; that stretch reads PSAPSLVKRA…DFKQFLAPMS (78 aa). Serine 1680 carries the post-translational modification O-(pantetheine 4'-phosphoryl)serine. The tract at residues 1720–1765 is disordered; sequence SQGEASDGSTSDPESSSSFNGGSSTDESSAGSPVSSPPNEKVTQVE. The segment covering 1725–1748 has biased composition (low complexity); it reads SDGSTSDPESSSSFNGGSSTDESS. Residues 1749–1765 show a composition bias toward polar residues; sequence AGSPVSSPPNEKVTQVE. Residues 1764 to 1841 enclose the Carrier 2 domain; the sequence is VEQHATIKEI…DVEDALGLKP (78 aa). Serine 1801 bears the O-(pantetheine 4'-phosphoryl)serine mark. Residues 1879–2151 form a claisen cyclase domain region; that stretch reads SPHPRSTSIL…ELGSFIGNAM (273 aa). The active-site For Claisen cyclase activity is serine 1969.

The catalysed reaction is 6 malonyl-CoA + acetyl-CoA + 6 H(+) = naphtopyrone YWA1 + 6 CO2 + 7 CoA + H2O. The protein operates within secondary metabolite biosynthesis. Functionally, non-reducing polyketide synthase; part of the gene cluster that mediates the biosynthesis of aurasperone B, a dimeric gamma-naphthopyrone. The first step in the biosynthesis of aurasperone B is the production of gamma-naphthopyrone precursor YWA1 by the non-reducing polyketide synthase albA, via condensation of one acetyl-CoA starter unit with 6 malonyl-CoA units. YWA1 is then methylated by aunE at position C-6 to yield foncesin which is further methylated at position C-8 by aunD to produce fonsecin B. A key enzyme in the biosynthetic pathway is the cytochrome P450 monooxygenase aunB which catalyzes the oxidative dimerization of fonsecin B to aurasperone B. AunB also catalyzes the oxidative dimerization of rubrofusarin B into aurasperone A. The polypeptide is Non-reducing polyketide synthase albA (Aspergillus niger (strain ATCC MYA-4892 / CBS 513.88 / FGSC A1513)).